The sequence spans 412 residues: [Pyruvate dehydrogenase (acetyl-transferring)] kinase isozyme 4, mitochondrial (412 aa).

Residues 138 to 368 enclose the Histidine kinase domain; the sequence is ILEYKDTCTV…DAIIYLKALS (231 aa). ATP-binding positions include 254–261, Asp-293, 312–313, and 329–334; these read ELFKNAMR, ST, and GFGYGL.

It belongs to the PDK/BCKDK protein kinase family. In terms of assembly, homodimer. Interacts with the pyruvate dehydrogenase complex subunit DLAT, and is part of the multimeric pyruvate dehydrogenase complex that contains multiple copies of pyruvate dehydrogenase (E1), dihydrolipoamide acetyltransferase (DLAT, E2) and lipoamide dehydrogenase (DLD, E3). As to expression, detected in skeletal muscle and heart.

The protein resides in the mitochondrion matrix. It carries out the reaction L-seryl-[pyruvate dehydrogenase E1 alpha subunit] + ATP = O-phospho-L-seryl-[pyruvate dehydrogenase E1 alpha subunit] + ADP + H(+). Kinase that plays a key role in regulation of glucose and fatty acid metabolism and homeostasis via phosphorylation of the pyruvate dehydrogenase subunits PDHA1 and PDHA2. This inhibits pyruvate dehydrogenase activity, and thereby regulates metabolite flux through the tricarboxylic acid cycle, down-regulates aerobic respiration and inhibits the formation of acetyl-coenzyme A from pyruvate. Inhibition of pyruvate dehydrogenase decreases glucose utilization and increases fat metabolism in response to prolonged fasting and starvation. Plays an important role in maintaining normal blood glucose levels under starvation, and is involved in the insulin signaling cascade. Via its regulation of pyruvate dehydrogenase activity, plays an important role in maintaining normal blood pH and in preventing the accumulation of ketone bodies under starvation. In the fed state, mediates cellular responses to glucose levels and to a high-fat diet. Regulates both fatty acid oxidation and de novo fatty acid biosynthesis. Plays a role in the generation of reactive oxygen species. Protects detached epithelial cells against anoikis. Plays a role in cell proliferation via its role in regulating carbohydrate and fatty acid metabolism. In Ictidomys tridecemlineatus (Thirteen-lined ground squirrel), this protein is [Pyruvate dehydrogenase (acetyl-transferring)] kinase isozyme 4, mitochondrial (PDK4).